Reading from the N-terminus, the 858-residue chain is Bifunctional uridylyltransferase/uridylyl-removing enzyme (858 aa).

The uridylyltransferase stretch occupies residues 1 to 324; the sequence is MSAHAAPSPE…PATSGITRVL (324 aa). A uridylyl-removing region spans residues 325–681; sequence SPDRFVEKQG…ARPSPIGDAL (357 aa). The region spanning 443–565 is the HD domain; it reads VDQHILMVLR…VGNERYLTAL (123 aa). 2 ACT domains span residues 682–761 and 790–858; these read QVLV…PEPS and ILSV…AIAV.

The protein belongs to the GlnD family. It depends on Mg(2+) as a cofactor.

The enzyme catalyses [protein-PII]-L-tyrosine + UTP = [protein-PII]-uridylyl-L-tyrosine + diphosphate. The catalysed reaction is [protein-PII]-uridylyl-L-tyrosine + H2O = [protein-PII]-L-tyrosine + UMP + H(+). Uridylyltransferase (UTase) activity is inhibited by glutamine, while glutamine activates uridylyl-removing (UR) activity. Functionally, modifies, by uridylylation and deuridylylation, the PII regulatory proteins (GlnB and homologs), in response to the nitrogen status of the cell that GlnD senses through the glutamine level. Under low glutamine levels, catalyzes the conversion of the PII proteins and UTP to PII-UMP and PPi, while under higher glutamine levels, GlnD hydrolyzes PII-UMP to PII and UMP (deuridylylation). Thus, controls uridylylation state and activity of the PII proteins, and plays an important role in the regulation of nitrogen fixation and metabolism. This Burkholderia lata (strain ATCC 17760 / DSM 23089 / LMG 22485 / NCIMB 9086 / R18194 / 383) protein is Bifunctional uridylyltransferase/uridylyl-removing enzyme.